We begin with the raw amino-acid sequence, 499 residues long: Phenylalanine--tRNA ligase alpha subunit (499 aa).

Residues Thr-330, 372-374 (QVE), and Tyr-412 each bind L-phenylalanine. Glu-414 is a binding site for Mg(2+). L-phenylalanine is bound at residue Phe-438.

It belongs to the class-II aminoacyl-tRNA synthetase family. Phe-tRNA synthetase alpha subunit type 2 subfamily. Tetramer of two alpha and two beta subunits. Mg(2+) serves as cofactor.

Its subcellular location is the cytoplasm. It catalyses the reaction tRNA(Phe) + L-phenylalanine + ATP = L-phenylalanyl-tRNA(Phe) + AMP + diphosphate + H(+). The polypeptide is Phenylalanine--tRNA ligase alpha subunit (frs2) (Schizosaccharomyces pombe (strain 972 / ATCC 24843) (Fission yeast)).